Consider the following 760-residue polypeptide: Probable ATP-dependent RNA helicase DDX27 (760 aa).

Residues 1–50 (MLAELGFIRTIGENDEVPVEPESDSGDEEEEGPIVLGRKQKALQKNRSAD) are disordered. The segment covering 13–32 (ENDEVPVEPESDSGDEEEEG) has biased composition (acidic residues). 3 positions are modified to phosphoserine: Ser23, Ser25, and Ser48. A Required for interaction with the PEBOW complex motif is present at residues 55-57 (FVF). Residues 80–149 (KRAATTLDEK…TDYSSEDEEI (70 aa)) form a disordered region. Basic and acidic residues predominate over residues 98 to 122 (KAEDKEAKSGKVEEKEGQADSDLKG). Over residues 126–148 (PGEDEAGSKDEDSETDYSSEDEE) the composition is skewed to acidic residues. Phosphoserine occurs at positions 133 and 144. The short motif at 157-166 (KVKEKKKKKK) is the Nuclear localization signal element. Positions 184–212 (LSFQDMNLSRPLLKAITAMGFKQPTPIQK) match the Q motif motif. In terms of domain architecture, Helicase ATP-binding spans 215–389 (IPVGLLGKDI…SVSLKNPVRI (175 aa)). 228–235 (AATGTGKT) is an ATP binding site. The short motif at 337-340 (DEAD) is the DEAD box element. One can recognise a Helicase C-terminal domain in the interval 419 to 569 (IVAALLMRTF…DVILKFRDKI (151 aa)). 2 disordered regions span residues 605 to 624 (KGKE…TKEE) and 679 to 760 (RLAK…KRKK). 2 stretches are compositionally biased toward basic residues: residues 682-691 (KRNRRTKRAR) and 744-760 (RQRR…KRKK).

Belongs to the DEAD box helicase family. DDX27/DRS1 subfamily. In terms of assembly, associates with PeBoW complex, composed of BOP1, PES1 and WDR12. Interacts directly with BOP1 and PES1.

It is found in the nucleus. The protein localises to the nucleolus. It localises to the chromosome. The catalysed reaction is ATP + H2O = ADP + phosphate + H(+). Probable ATP-dependent RNA helicase. Component of the nucleolar ribosomal RNA (rRNA) processing machinery that regulates 3' end formation of ribosomal 47S rRNA. The chain is Probable ATP-dependent RNA helicase DDX27 (Ddx27) from Mus musculus (Mouse).